The primary structure comprises 636 residues: Capsid vertex component 2 (636 aa).

Positions 1–48 are interaction with major capsid protein/MCP; the sequence is MSLLHTFWRLPVAVFFEPHEENVLRCPERVLRRLLEDAAVAMRGGGWR. A disordered region spans residues 97-125; that stretch reads DEGPSPRTLLQPPCRPRSSSPGTGVAGAS.

Belongs to the herpesviridae CVC2 protein family. In terms of assembly, heterodimerizes with CVC1. Interacts with major capsid protein/MCP and triplex capsid protein 1/TRX1 at the pentamer vertices. Interacts with the large tegument protein/LTP.

The protein resides in the virion. It is found in the host nucleus. Functionally, capsid vertex-specific component that plays a role during viral DNA encapsidation, assuring correct genome cleavage and presumably stabilizing capsids that contain full-length viral genomes. Participates in the interaction between the capsid and the tegument through interaction with the large tegument protein/LTP. The protein is Capsid vertex component 2 of Homo sapiens (Human).